The primary structure comprises 613 residues: DNA polymerase II small subunit (613 aa).

The protein belongs to the DNA polymerase delta/II small subunit family. As to quaternary structure, heterodimer of a large subunit and a small subunit.

It carries out the reaction DNA(n) + a 2'-deoxyribonucleoside 5'-triphosphate = DNA(n+1) + diphosphate. The catalysed reaction is Exonucleolytic cleavage in the 3'- to 5'-direction to yield nucleoside 5'-phosphates.. Possesses two activities: a DNA synthesis (polymerase) and an exonucleolytic activity that degrades single-stranded DNA in the 3' to 5' direction. Has a template-primer preference which is characteristic of a replicative DNA polymerase. This is DNA polymerase II small subunit (polB) from Pyrococcus furiosus (strain ATCC 43587 / DSM 3638 / JCM 8422 / Vc1).